The chain runs to 1292 residues: Calcium-transporting ATPase 2 (1292 aa).

Residues 1–105 (MPTYNDDDDS…EQASSKSSTS (105 aa)) are disordered. Residues 1–236 (MPTYNDDDDS…RLMLEAFKDK (236 aa)) are Cytoplasmic-facing. Residues 23–41 (KPSSSQFLGVPSSNYNQRE) are compositionally biased toward polar residues. Low complexity predominate over residues 44-60 (SRSGSSTISREPSSSGT). Residues 68–78 (DSMKESYDKNK) show a composition bias toward basic and acidic residues. Residues 237 to 257 (VLILLSIAAVVSLALGLYQTF) form a helical membrane-spanning segment. The Vacuolar segment spans residues 258–273 (GQPPTLDPITGKPEPR). A helical membrane pass occupies residues 274-294 (VEWVEGVAIMAAIVIVVTVGG). Residues 295-448 (VNDWQKELQF…QLRLSRVADA (154 aa)) lie on the Cytoplasmic side of the membrane. The helical transmembrane segment at 449 to 469 (IAKLGGAASALLFIVLLIEFL) threads the bilayer. At 470–488 (VRLKSNDSSSKNKGQEFLQ) the chain is on the vacuolar side. A helical membrane pass occupies residues 489–509 (ILIVSVTLLVVAVPEGLPLAV). The Ca(2+) site is built by V498 and E503. Over 510-938 (TLALAFATNR…GRTVNDAVKK (429 aa)) the chain is Cytoplasmic. D545 (4-aspartylphosphate intermediate) is an active-site residue. Positions 545 and 547 each coordinate Mg(2+). ATP-binding positions include T547, E638, K691, R736, 807 to 809 (TGD), R856, and K862. D881 contributes to the Mg(2+) binding site. Residue N884 coordinates ATP. A helical transmembrane segment spans residues 939 to 959 (FLQFQITVNITAVFLTIISAV). Position 947 (N947) interacts with Ca(2+). At 960 to 966 (ASTDQSS) the chain is on the vacuolar side. A helical transmembrane segment spans residues 967–987 (VLTAVQLLWVNLIMDTLAALA). The Ca(2+) site is built by N977 and D981. Topologically, residues 988–1016 (LATDPPTPEVLKRKPEKPGASLFTFDMWK) are cytoplasmic. Residues 1017–1037 (MIICQSMYQLAVTLVLHFAGN) traverse the membrane as a helical segment. The Vacuolar portion of the chain corresponds to 1038 to 1084 (SIFHYPSNTADMNTIVFNTFVWLQLFNEINNRRLDNKLNIFERINHN). A helical transmembrane segment spans residues 1085 to 1105 (FLFIAIFVIVAGIQVIIVFFG). At 1106 to 1115 (GAAFSVKRID) the chain is on the cytoplasmic side. Residues 1116 to 1136 (GKGWAISIVFGVISIPLGALI) traverse the membrane as a helical segment. The Vacuolar segment spans residues 1137–1292 (RCVPNNFLRK…ALDKKSSNVH (156 aa)).

This sequence belongs to the cation transport ATPase (P-type) (TC 3.A.3) family.

It localises to the vacuole membrane. It carries out the reaction Ca(2+)(in) + ATP + H2O = Ca(2+)(out) + ADP + phosphate + H(+). Functionally, this magnesium-dependent enzyme catalyzes the hydrolysis of ATP coupled with the transport of calcium. Transports the calcium to the vacuole and participates in the control of the cytosolic free calcium. This Schizosaccharomyces pombe (strain 972 / ATCC 24843) (Fission yeast) protein is Calcium-transporting ATPase 2 (pmc1).